The primary structure comprises 160 residues: Transcription antitermination protein NusB (160 aa).

The protein belongs to the NusB family.

Involved in transcription antitermination. Required for transcription of ribosomal RNA (rRNA) genes. Binds specifically to the boxA antiterminator sequence of the ribosomal RNA (rrn) operons. In Sinorhizobium medicae (strain WSM419) (Ensifer medicae), this protein is Transcription antitermination protein NusB.